Consider the following 227-residue polypeptide: Phosphatidate cytidylyltransferase (227 aa).

6 helical membrane-spanning segments follow: residues 31-51 (FVIA…LVGM), 65-85 (IPYL…LTFL), 93-113 (WLIM…MIGG), 131-151 (WSGL…ASFI), 165-185 (IYLF…DLFI), and 206-226 (GVLD…FISI).

The protein belongs to the CDS family.

The protein localises to the cell membrane. It catalyses the reaction a 1,2-diacyl-sn-glycero-3-phosphate + CTP + H(+) = a CDP-1,2-diacyl-sn-glycerol + diphosphate. It functions in the pathway phospholipid metabolism; CDP-diacylglycerol biosynthesis; CDP-diacylglycerol from sn-glycerol 3-phosphate: step 3/3. This chain is Phosphatidate cytidylyltransferase (cdsA), found in Rickettsia felis (strain ATCC VR-1525 / URRWXCal2) (Rickettsia azadi).